The sequence spans 532 residues: MLSFILSIFPIVLLIYLMVKRNALPSYVALPWVATLVMGVHLLHFNTDIVTISANVVSAIIAVQTPITVIFGAILFNRFSEISGATNIMRKWLGNINPNPVAQLMIIGWAFAFMIEGASGFGTPAAIAAPILVGLGFHPLKVAMLALIMNSVPVSFGAVGTPTWFGFGALKLSEDMILEIGSITAFIHSIAALIIPLLALRILVNWDDIRKNIVFIYISVLGCVVPYFLIAQVNYEFPSLVGGAIGLFISVWAANRNIGLAKVTNTLDNNAVSAGEVVKALFPTGLLIAFLIVTRIHQLPFKAMMNDATIWFSTTLGSLGLFEISKGLIFSLKNIFGSNVSSSYKLLYVPALIPFVITVLIAIPFFKISSSNVKQILVSSLQQSKNPFIALIGALVMVNLMLVGGEHSMVKIIGRTFAEISGSNWTIFSSFLGAIGSFFSGSNTVSNLTFGSVQLSTAETTGISVALVLALQSVGGAMGNMVCINNIVAVSSVLNISNQEGTIIKKTIIPMIIYGIIAALGALFLVPLFYNL.

Transmembrane regions (helical) follow at residues 23–43 (ALPSYVALPWVATLVMGVHLL), 56–76 (VVSAIIAVQTPITVIFGAILF), 101–121 (VAQLMIIGWAFAFMIEGASGF), 129–149 (APILVGLGFHPLKVAMLALIM), 152–172 (VPVSFGAVGTPTWFGFGALKL), 180–200 (IGSITAFIHSIAALIIPLLAL), 213–233 (IVFIYISVLGCVVPYFLIAQV), 234–254 (NYEFPSLVGGAIGLFISVWAA), 274–294 (AGEVVKALFPTGLLIAFLIVT), 346–366 (LLYVPALIPFVITVLIAIPFF), 387–407 (PFIALIGALVMVNLMLVGGEH), 420–440 (ISGSNWTIFSSFLGAIGSFFS), 462–482 (GISVALVLALQSVGGAMGNMV), and 508–528 (IIPMIIYGIIAALGALFLVPL).

The protein belongs to the lactate permease family.

It localises to the cell inner membrane. In terms of biological role, may play a role in L-lactate transport. This is Putative L-lactate permease from Haemophilus influenzae (strain ATCC 51907 / DSM 11121 / KW20 / Rd).